The primary structure comprises 265 residues: Tryptophan 2,3-dioxygenase (265 aa).

Residues 38 to 42 and R104 each bind substrate; that span reads FIVVH. H223 is a heme binding site. T237 provides a ligand contact to substrate.

It belongs to the tryptophan 2,3-dioxygenase family. In terms of assembly, homotetramer. Requires heme as cofactor.

The enzyme catalyses L-tryptophan + O2 = N-formyl-L-kynurenine. The protein operates within amino-acid degradation; L-tryptophan degradation via kynurenine pathway; L-kynurenine from L-tryptophan: step 1/2. In terms of biological role, heme-dependent dioxygenase that catalyzes the oxidative cleavage of the L-tryptophan (L-Trp) pyrrole ring and converts L-tryptophan to N-formyl-L-kynurenine. Catalyzes the oxidative cleavage of the indole moiety. This Anaeromyxobacter sp. (strain K) protein is Tryptophan 2,3-dioxygenase.